A 448-amino-acid polypeptide reads, in one-letter code: RING finger protein 44 (448 aa).

An RING-type; atypical zinc finger spans residues 396 to 437 (CVVCFSDFESRQLLRVLPCNHEFHAKCVDKWLKTNRTCPICR).

The polypeptide is RING finger protein 44 (rnf44) (Danio rerio (Zebrafish)).